Consider the following 420-residue polypeptide: Phosphatidylinositol 5-phosphate 4-kinase type-2 gamma (420 aa).

Ala-2 bears the N-acetylalanine mark. At Ser-26 the chain carries Phosphoserine. A PIPK domain is found at 43-419 (AADPLVGVFL…RFLDFISNIF (377 aa)). Residues 69–75 (VMLLPDD) are required for interaction with PIP5K1A. Ser-349 carries the phosphoserine modification.

Interacts with PIP5K1A; the interaction inhibits PIP5K1A kinase activity. In terms of processing, phosphorylated, phosphorylation is induced by EGF. Widely expressed, with the most abundant expression in kidney.

The protein localises to the endoplasmic reticulum. Its subcellular location is the cytoplasm. It catalyses the reaction a 1,2-diacyl-sn-glycero-3-phospho-(1D-myo-inositol-5-phosphate) + ATP = a 1,2-diacyl-sn-glycero-3-phospho-(1D-myo-inositol-4,5-bisphosphate) + ADP + H(+). The catalysed reaction is 1,2-dihexadecanoyl-sn-glycero-3-phospho-(1D-myo-inositol-5-phosphate) + ATP = 1,2-dihexadecanoyl-sn-glycero-3-phospho-(1D-myo-inositol-4,5-bisphosphate) + ADP + H(+). The enzyme catalyses 1,2-dihexadecanoyl-sn-glycero-3-phospho-(1D-myo-inositol-5-phosphate) + GTP = 1,2-dihexadecanoyl-sn-glycero-3-phospho-(1D-myo-inositol-4,5-bisphosphate) + GDP + H(+). Its function is as follows. Phosphatidylinositol 5-phosphate 4-kinase with low enzymatic activity. May be a GTP sensor, has higher GTP-dependent kinase activity than ATP-dependent kinase activity. PIP4Ks negatively regulate insulin signaling through a catalytic-independent mechanism. They interact with PIP5Ks and suppress PIP5K-mediated PtdIns(4,5)P2 synthesis and insulin-dependent conversion to PtdIns(3,4,5)P3. The polypeptide is Phosphatidylinositol 5-phosphate 4-kinase type-2 gamma (Rattus norvegicus (Rat)).